The primary structure comprises 111 residues: uncharacterized protein (111 aa).

The protein resides in the cytoplasm. The protein localises to the nucleus. This is an uncharacterized protein from Schizosaccharomyces pombe (strain 972 / ATCC 24843) (Fission yeast).